Consider the following 581-residue polypeptide: 2-hydroxyacyl-CoA lyase 1 (581 aa).

Phosphoserine occurs at positions 4 and 6. Glutamate 63 serves as a coordination point for thiamine diphosphate. N6-succinyllysine occurs at positions 354, 361, and 368. The thiamine pyrophosphate binding stretch occupies residues 404–487 (TMDIGRTMLQ…IILLVVNNNG (84 aa)). Residues aspartate 458 and asparagine 485 each contribute to the Mg(2+) site. Residues 579-581 (SNM) carry the Microbody targeting signal motif.

The protein belongs to the TPP enzyme family. Homotetramer. Mg(2+) serves as cofactor. The cofactor is thiamine diphosphate. In terms of tissue distribution, predominanly expressed in liver.

The protein localises to the peroxisome. It catalyses the reaction a 2-hydroxy-3-methyl fatty acyl-CoA = a 2-methyl-branched fatty aldehyde + formyl-CoA. The catalysed reaction is an (R)-2-hydroxy-long-chain-fatty acyl-CoA = a long-chain fatty aldehyde + formyl-CoA. It carries out the reaction 2-hydroxy-3-methylhexadecanoyl-CoA = 2-methylpentadecanal + formyl-CoA. The enzyme catalyses 2-hydroxyoctadecanoyl-CoA = heptadecanal + formyl-CoA. It catalyses the reaction 2-hydroxyphytanoyl-CoA = 2,6,10,14-tetramethylpentadecanal + formyl-CoA. Its pathway is lipid metabolism; fatty acid metabolism. Peroxisomal 2-OH acyl-CoA lyase involved in the cleavage (C1 removal) reaction in the fatty acid alpha-oxydation in a thiamine pyrophosphate (TPP)-dependent manner. Involved in the degradation of 3-methyl-branched fatty acids like phytanic acid and the shortening of 2-hydroxy long-chain fatty acids. Plays a significant role in the biosynthesis of heptadecanal in the liver. The sequence is that of 2-hydroxyacyl-CoA lyase 1 (Hacl1) from Mus musculus (Mouse).